The sequence spans 413 residues: Putative F-box protein At3g58820 (413 aa).

One can recognise an F-box domain in the interval 1–48 (MDGVSSLPNELLCHILSFLTTKEAALTSILSKRWRNLIAFVPNLYIDD).

This chain is Putative F-box protein At3g58820, found in Arabidopsis thaliana (Mouse-ear cress).